We begin with the raw amino-acid sequence, 318 residues long: MPNIVLFSGSSHQDLSQRVADRLGLELGKVVTKKFSNQETSVEIGESVRGEDVYIIQSGCGEINDNLMELLIMINACKIASSSRVTAVIPCFPYARQDKKDKSRAPISAKLVANMLSVAGADHIITMDLHASQIQGFFDIPVDNLYAEPAVLQWIRENITEWRNCIIVSPDAGGAKRVTSIADRLNVEFALIHKERKKANEVDRMVLVGDVKDRVAILVDDMADTCGTICHAADKLLSAGATKVYAILTHGIFSGPAISRINNAAFEAVVVTNTIPQEDKMKHCSKIQVIDISMILAEAIRRTHNGESVSYLFSHVPL.

96-101 (RQDKKD) lines the ATP pocket. Residues Asp-128, His-130, Asp-139, and Asp-143 each coordinate Mg(2+). His-130 serves as a coordination point for ATP. A binding of phosphoribosylpyrophosphate region spans residues 212-227 (KDRVAILVDDMADTCG).

It belongs to the ribose-phosphate pyrophosphokinase family. As to quaternary structure, homodimer. The active form is probably a hexamer composed of 3 homodimers. Requires Mg(2+) as cofactor.

It catalyses the reaction D-ribose 5-phosphate + ATP = 5-phospho-alpha-D-ribose 1-diphosphate + AMP + H(+). It functions in the pathway metabolic intermediate biosynthesis; 5-phospho-alpha-D-ribose 1-diphosphate biosynthesis; 5-phospho-alpha-D-ribose 1-diphosphate from D-ribose 5-phosphate (route I): step 1/1. Activated by magnesium and inorganic phosphate. In terms of biological role, catalyzes the synthesis of phosphoribosylpyrophosphate (PRPP) that is essential for nucleotide synthesis. The chain is Ribose-phosphate pyrophosphokinase 2 (Prps2) from Rattus norvegicus (Rat).